The sequence spans 655 residues: Probable inactive receptor kinase At1g48480 (655 aa).

An N-terminal signal peptide occupies residues 1–32 (MRVFFFPNSSMAILSVFLSLLLLSLPLPSTQD). LRR repeat units lie at residues 71 to 95 (SNRV…IFGN), 98 to 120 (QLRT…LSTS), 122 to 144 (NLRH…LFSL), 146 to 169 (HLVR…TNLT), 170 to 192 (KLKT…DLPL), and 194 to 215 (QFNV…RFES). Residues 234–260 (EETVPSQPTSGGNRTPPSVEGSEEKKK) form a disordered region. Positions 237-249 (VPSQPTSGGNRTP) are enriched in polar residues. A helical membrane pass occupies residues 269-289 (IAGIVIGCVVGFALIVLILMV). Residues 371 to 646 (RASAEVLGKG…RKMENLRPYS (276 aa)) enclose the Protein kinase domain. Ser-373 is subject to Phosphoserine. 377–385 (LGKGTFGTA) provides a ligand contact to ATP. At Thr-394 the chain carries Phosphothreonine. Lys-399 contributes to the ATP binding site. Residue Ser-450 is modified to Phosphoserine. Thr-526 is subject to Phosphothreonine. Ser-546 carries the post-translational modification Phosphoserine. Phosphothreonine is present on Thr-622.

It belongs to the protein kinase superfamily. As to expression, highly expressed in seedlings and leaves. Lower expression in roots, stems, flowers and siliques. Detected in the vascular tissues of roots, in the trichomes of young rosettes leaves and hydathodes, in the floral abscission zones, in filament apex and stomata cells of anthers, in inflorescence stems and in sepals.

It localises to the cell membrane. This is Probable inactive receptor kinase At1g48480 (RKL1) from Arabidopsis thaliana (Mouse-ear cress).